A 213-amino-acid polypeptide reads, in one-letter code: MSCEQHYRTLIDKYIDGEATAEERQELNEHLETCDACFEYMLEVRKVVAFVQSASHVQAPEGFTENVMKNLPKRKQTNRFKVWMRRYPLAVAAAVFVLLMSTSLFSMWSSDGEHVTVTGTGNVSIDQESGRVIVPEGEVIQGDLVVRNGELIIEGEVQGNVLLVNSSQYLASPGSVSGEIDEVNQILDWIWYHTKKFLTKVIDISDEKNSPSS.

The Cytoplasmic portion of the chain corresponds to 1-86 (MSCEQHYRTL…TNRFKVWMRR (86 aa)). The Zn(2+) site is built by H30, C34, and C37. The helical transmembrane segment at 87–109 (YPLAVAAAVFVLLMSTSLFSMWS) threads the bilayer. Topologically, residues 110–213 (SDGEHVTVTG…ISDEKNSPSS (104 aa)) are extracellular.

It belongs to the zinc-associated anti-sigma factor (ZAS) superfamily. Anti-sigma-W factor family. Requires Zn(2+) as cofactor. In terms of processing, is processed by three successive proteolytic events. First, the extracellular region of RsiW is cleaved by PrsW (Site-1 cleavage) in response to cell envelope stresses. Next, it undergoes cleavage at an intramembrane site (Site-2 cleavage) mediated by RasP. This cleavage uncovers a cryptic proteolytic tag with conserved alanine residues in the transmembrane segment, that is recognized mainly by the ClpXP protease, which completely degrades the protein in the cytoplasm and leads to the induction of the sigma-W-controlled genes.

The protein resides in the membrane. Is the anti-sigma factor for SigW. The presence of RsiW leads to the inactivation of SigW, and its proteolytic destruction to sigma-W activation. The chain is Anti-sigma-W factor RsiW (rsiW) from Halalkalibacterium halodurans (strain ATCC BAA-125 / DSM 18197 / FERM 7344 / JCM 9153 / C-125) (Bacillus halodurans).